The primary structure comprises 286 residues: Bifunctional protein FolD (286 aa).

NADP(+) contacts are provided by residues 165–167 (GRS), serine 190, and valine 231.

The protein belongs to the tetrahydrofolate dehydrogenase/cyclohydrolase family. As to quaternary structure, homodimer.

It catalyses the reaction (6R)-5,10-methylene-5,6,7,8-tetrahydrofolate + NADP(+) = (6R)-5,10-methenyltetrahydrofolate + NADPH. The enzyme catalyses (6R)-5,10-methenyltetrahydrofolate + H2O = (6R)-10-formyltetrahydrofolate + H(+). The protein operates within one-carbon metabolism; tetrahydrofolate interconversion. Functionally, catalyzes the oxidation of 5,10-methylenetetrahydrofolate to 5,10-methenyltetrahydrofolate and then the hydrolysis of 5,10-methenyltetrahydrofolate to 10-formyltetrahydrofolate. The polypeptide is Bifunctional protein FolD (Bacillus cytotoxicus (strain DSM 22905 / CIP 110041 / 391-98 / NVH 391-98)).